The chain runs to 430 residues: Probable glucose-6-phosphate isomerase (430 aa).

Glu271 acts as the Proton donor in catalysis. Residues His292, His303, and Lys403 contribute to the active site.

This sequence belongs to the GPI family.

It localises to the cytoplasm. It carries out the reaction alpha-D-glucose 6-phosphate = beta-D-fructose 6-phosphate. It participates in carbohydrate biosynthesis; gluconeogenesis. Its pathway is carbohydrate degradation; glycolysis; D-glyceraldehyde 3-phosphate and glycerone phosphate from D-glucose: step 2/4. Catalyzes the reversible isomerization of glucose-6-phosphate to fructose-6-phosphate. This chain is Probable glucose-6-phosphate isomerase, found in Haloquadratum walsbyi (strain DSM 16790 / HBSQ001).